Reading from the N-terminus, the 353-residue chain is MTIAVGKFTKDEKDLFDSMDDWLRRDRFVFVGWSGLLLFPCAYFALGGWFTGTTFVTSWYTHGLASSYLEGCNFLTAAVSTPANSLAHSLLLLWGPEAQGDFTRWCQLGGLWAFVALHGAFALIGFMLRQFELARSVQLRPYNAIAFSGPIAVFVSVFLIYPLGQSGWFFAPSFGVAAIFRFILFFQGFHNWTLNPFHMMGVAGVLGAALLCAIHGATVENTLFEDGDGANTFRAFNPTQAEETYSMVTANRFWSQIFGVAFSNKRWLHFFMLFVPVTGLWMSALGVVGLALNLRAYDFVSQEIRAAEDPEFETFYTKNILLNEGIRAWMAAQDQPHENLIFPEEVLPRGNAL.

N-acetylthreonine is present on Thr-2. Residue Thr-2 is modified to Phosphothreonine. Residues 41 to 61 (CAYFALGGWFTGTTFVTSWYT) traverse the membrane as a helical segment. Residue His-118 coordinates chlorophyll a. The helical transmembrane segment at 125 to 141 (GFMLRQFELARSVQLRP) threads the bilayer. Pheophytin a-binding residues include Gln-130 and Asn-143. Residues 153–166 (VFVSVFLIYPLGQS) form a helical membrane-spanning segment. His-198 serves as a coordination point for chlorophyll a. Residues 208 to 228 (AALLCAIHGATVENTLFEDGD) form a helical membrane-spanning segment. 2 residues coordinate a plastoquinone: His-215 and Phe-262. His-215 serves as a coordination point for Fe cation. A Fe cation-binding site is contributed by His-269. The helical transmembrane segment at 279 to 295 (GLWMSALGVVGLALNLR) threads the bilayer.

Belongs to the reaction center PufL/M/PsbA/D family. In terms of assembly, PSII is composed of 1 copy each of membrane proteins PsbA, PsbB, PsbC, PsbD, PsbE, PsbF, PsbH, PsbI, PsbJ, PsbK, PsbL, PsbM, PsbT, PsbX, PsbY, PsbZ, Psb30/Ycf12, at least 3 peripheral proteins of the oxygen-evolving complex and a large number of cofactors. It forms dimeric complexes. The D1/D2 heterodimer binds P680, chlorophylls that are the primary electron donor of PSII, and subsequent electron acceptors. It shares a non-heme iron and each subunit binds pheophytin, quinone, additional chlorophylls, carotenoids and lipids. There is also a Cl(-1) ion associated with D1 and D2, which is required for oxygen evolution. The PSII complex binds additional chlorophylls, carotenoids and specific lipids. is required as a cofactor.

Its subcellular location is the plastid. It localises to the chloroplast thylakoid membrane. It carries out the reaction 2 a plastoquinone + 4 hnu + 2 H2O = 2 a plastoquinol + O2. Photosystem II (PSII) is a light-driven water:plastoquinone oxidoreductase that uses light energy to abstract electrons from H(2)O, generating O(2) and a proton gradient subsequently used for ATP formation. It consists of a core antenna complex that captures photons, and an electron transfer chain that converts photonic excitation into a charge separation. The D1/D2 (PsbA/PsbD) reaction center heterodimer binds P680, the primary electron donor of PSII as well as several subsequent electron acceptors. D2 is needed for assembly of a stable PSII complex. The polypeptide is Photosystem II D2 protein (Spinacia oleracea (Spinach)).